Reading from the N-terminus, the 206-residue chain is UPF0502 protein Acid_1185 (206 aa).

Belongs to the UPF0502 family.

This is UPF0502 protein Acid_1185 from Solibacter usitatus (strain Ellin6076).